The chain runs to 296 residues: tRNA U34 carboxymethyltransferase (296 aa).

Residues K64, W78, K83, G102, 124 to 126, 151 to 152, Y171, and R286 contribute to the carboxy-S-adenosyl-L-methionine site; these read DPS and VE.

Belongs to the class I-like SAM-binding methyltransferase superfamily. CmoB family. Homotetramer.

It carries out the reaction carboxy-S-adenosyl-L-methionine + 5-hydroxyuridine(34) in tRNA = 5-carboxymethoxyuridine(34) in tRNA + S-adenosyl-L-homocysteine + H(+). Catalyzes carboxymethyl transfer from carboxy-S-adenosyl-L-methionine (Cx-SAM) to 5-hydroxyuridine (ho5U) to form 5-carboxymethoxyuridine (cmo5U) at position 34 in tRNAs. The sequence is that of tRNA U34 carboxymethyltransferase from Sulfurimonas denitrificans (strain ATCC 33889 / DSM 1251) (Thiomicrospira denitrificans (strain ATCC 33889 / DSM 1251)).